Consider the following 485-residue polypeptide: Amino acid permease 1 (485 aa).

Over residues 1 to 15 (MKSFNTEGHNHSTAE) the composition is skewed to polar residues. The disordered stretch occupies residues 1–35 (MKSFNTEGHNHSTAESGDAYTVSDPTKNVDEDGRE). The Cytoplasmic portion of the chain corresponds to 1–40 (MKSFNTEGHNHSTAESGDAYTVSDPTKNVDEDGREKRTGT). Transmembrane regions (helical) follow at residues 41 to 61 (WLTA…LSLA) and 62 to 82 (WAIA…FSFI). Residues 83–129 (TYFTSTMLADCYRAPDPVTGKRNYTYMDVVRSYLGGRKVQLCGVAQY) lie on the Cytoplasmic side of the membrane. The chain crosses the membrane as a helical span at residues 130–150 (GNLIGVTVGYTITASISLVAV). The Extracellular portion of the chain corresponds to 151 to 166 (GKSNCFHDKGHTADCT). Residues 167-187 (ISNYPYMAVFGIIQVILSQIP) form a helical membrane-spanning segment. Over 188 to 194 (NFHKLSF) the chain is Cytoplasmic. The chain crosses the membrane as a helical span at residues 195-215 (LSIMAAVMSFTYATIGIGLAI). Residues 216 to 245 (ATVAGGKVGKTSMTGTAVGVDVTAAQKIWR) are Extracellular-facing. A helical membrane pass occupies residues 246 to 266 (SFQAVGDIAFAYAYATVLIEI). Residues 267–285 (QDTLRSSPAENKAMKRASL) lie on the Cytoplasmic side of the membrane. A helical membrane pass occupies residues 286 to 306 (VGVSTTTFFYILCGCIGYAAF). Residues 307-318 (GNNAPGDFLTDF) lie on the Extracellular side of the membrane. A helical transmembrane segment spans residues 319-339 (GFFEPFWLIDFANACIAVHLI). At 340–394 (GAYQVFAQPIFQFVEKKCNRNYPDNKFITSEYSVNVPFLGKFNISLFRLVWRTAY) the chain is on the cytoplasmic side. 2 helical membrane-spanning segments follow: residues 395-415 (VVIT…LGLI) and 416-436 (GAAS…IAQT). Over 437–450 (KIKKYSARWIALKT) the chain is Cytoplasmic. A helical membrane pass occupies residues 451–471 (MCYVCLIVSLLAAAGSIAGLI). Residues 472–485 (SSVKTYKPFRTMHE) lie on the Extracellular side of the membrane.

It belongs to the amino acid/polyamine transporter 2 family. Amino acid/auxin permease (AAAP) (TC 2.A.18.2) subfamily. Highly expressed in developing pods. Found in the endosperm and in the storage parenchyma and the outer epidermis cells of the developing embryo. Lower levels of expression in flowers, in the vascular system of the cotyledon and in the root epidermal cells, including root hairs and throughout the root tip.

It localises to the cell membrane. With respect to regulation, inhibited by carbonylcyanide m-chlorophenylhydrazone and diethylpyrocarbonate (DEPC). Its function is as follows. Amino acid-proton symporter. Stereospecific transporter with a broad specificity for histidine, glutamate and neutral amino acids. Reduced affinities for asparagine and valine. Involved in amino acid uptake from the apoplastic cavity into the embryo cells for storage protein accumulation and in root amino acid uptake. This Arabidopsis thaliana (Mouse-ear cress) protein is Amino acid permease 1 (AAP1).